The sequence spans 924 residues: Autophagy-related protein 9B (924 aa).

A disordered region spans residues 1 to 144 (MVSRMGWGGR…QDSPGLRVGP (144 aa)). Topologically, residues 1–207 (MVSRMGWGGR…KIYSYHQRNG (207 aa)) are cytoplasmic. Residues 17 to 27 (WGDLGPGSVPL) show a composition bias toward low complexity. The span at 28 to 40 (LPMPLPPPPPPSC) shows a compositional bias: pro residues. Over residues 78-88 (LQGTGASQSCH) the composition is skewed to polar residues. A compositionally biased stretch (low complexity) spans 98–113 (PTQAQPAMTPASASPS). A Tyrosine-based sorting signal motif is present at residues 151–154 (YERL). The helical transmembrane segment at 208-228 (FACILLEDVFQLGQFIFIVTF) threads the bilayer. Residues 229–276 (TTFLLRCVDYNVLFANQPSNHTRPGPFHSKVTLSDAILPSAQCAERIR) lie on the Lumenal side of the membrane. The helical transmembrane segment at 277–297 (SSPLLVLLLVLAAGFWLVQLL) threads the bilayer. Over 298–438 (RSVCNLFSYW…GALAARWGRT (141 aa)) the chain is Cytoplasmic. Residues 439–459 (VLLLAALNLALSPLVLAWQVL) lie within the membrane without spanning it. The Cytoplasmic segment spans residues 460–526 (HVFYSHVELL…AAPPAPLRTL (67 aa)). A helical membrane pass occupies residues 527–547 (LARQLVFFAGALFAALLVLTV). Over 548–551 (YDED) the chain is Lumenal. Residues 552–572 (VLAVEHVLTAMTALGVTATVA) form a helical membrane-spanning segment. At 573 to 624 (RSFIPEEQCQGRAPQLLLQTALAHMHYLPEEPGPGGRDRAYRQMAQLLQYRA) the chain is on the cytoplasmic side. Residues 625 to 645 (VSLLEELLSPLLTPLFLLFWF) lie within the membrane without spanning it. The Cytoplasmic portion of the chain corresponds to 646 to 924 (RPRALEIIDF…KEPDRASCTD (279 aa)). The tract at residues 847 to 924 (QQEPWGEAAA…KEPDRASCTD (78 aa)) is disordered. Residues 878–890 (SWSSDGSSPASSP) show a composition bias toward low complexity. The span at 913–924 (TQKEPDRASCTD) shows a compositional bias: basic and acidic residues.

It belongs to the ATG9 family. In terms of assembly, homotrimer; forms a homotrimer with a central pore that forms a path between the two membrane leaflets. Highly expressed in placenta (trophoblast cells) and pituitary gland. Not expressed in vascular endothelial.

The protein localises to the preautophagosomal structure membrane. It carries out the reaction a 1,2-diacyl-sn-glycero-3-phosphocholine(in) = a 1,2-diacyl-sn-glycero-3-phosphocholine(out). It catalyses the reaction a 1,2-diacyl-sn-glycero-3-phospho-L-serine(in) = a 1,2-diacyl-sn-glycero-3-phospho-L-serine(out). The catalysed reaction is a 1,2-diacyl-sn-glycero-3-phosphoethanolamine(in) = a 1,2-diacyl-sn-glycero-3-phosphoethanolamine(out). Its function is as follows. Phospholipid scramblase involved in autophagy by mediating autophagosomal membrane expansion. Cycles between the preautophagosomal structure/phagophore assembly site (PAS) and the cytoplasmic vesicle pool and supplies membrane for the growing autophagosome. Lipid scramblase activity plays a key role in preautophagosomal structure/phagophore assembly by distributing the phospholipids that arrive through ATG2 (ATG2A or ATG2B) from the cytoplasmic to the luminal leaflet of the bilayer, thereby driving autophagosomal membrane expansion. In addition to autophagy, also plays a role in necrotic cell death. This Homo sapiens (Human) protein is Autophagy-related protein 9B (ATG9B).